Consider the following 161-residue polypeptide: Epididymal protein 13 (161 aa).

Residues 1–23 form the signal peptide; sequence MHRSEPFLKMSLLILLFLGLAEA. N-linked (GlcNAc...) asparagine glycosylation occurs at Asn56.

The protein resides in the secreted. In Homo sapiens (Human), this protein is Epididymal protein 13.